The primary structure comprises 479 residues: Bifunctional AAC/APH (479 aa).

Residues 8–180 form the N-acetyltransferase domain; the sequence is ICIRTLIDDD…DCYLMEYRYD (173 aa). The acetyl-CoA binding site stretch occupies residues 110 to 153; it reads KGIGTRYIKLIFEFLKKERNANAVILDPHKNNPRAIRAYQKSGF. Residue Asp-374 is the Proton acceptor; for phosphotransferase activity of the active site. Residue Asp-393 participates in a gentamycin binding.

The protein in the C-terminal section; belongs to the aminoglycoside phosphotransferase family.

Its subcellular location is the cytoplasm. It carries out the reaction a gentamycin + GTP = a gentamycin 2''-phosphate + GDP + H(+). Involved in resistance to gentamicin, tobramycin, and kanamycin. Tobramycin and kanamycin resistance is due to the ACC activity, specified by N-terminal region. The C-terminal region is a kinase that phosphorylates several 4,6-disubstituted aminoglycosides. This chain is Bifunctional AAC/APH (aacA-aphD), found in Enterococcus faecalis (strain ATCC 700802 / V583).